We begin with the raw amino-acid sequence, 325 residues long: LIM and senescent cell antigen-like-containing domain protein 1 (325 aa).

Residue alanine 2 is modified to N-acetylalanine. 5 consecutive LIM zinc-binding domains span residues cysteine 10–aspartate 62, cysteine 71–cysteine 121, cysteine 135–cysteine 184, cysteine 193–histidine 243, and cysteine 252–cysteine 303.

In terms of assembly, component of the heterotrimeric IPP (ILK-PINCH-PARVIN) complex composed of ILK, LIMS1/PINCH and PARVA; the complex binds to F-actin via the C-terminal tail of LIMS1 and the N-terminal region of PARVA, promoting F-actin filament bundling. Formation of the IPP complex is dependent on protein kinase C and precedes integrin-mediated cell adhesion and spreading. Competes with LIMS2 for interaction with ILK. Interacts with SH3/SH2 adapter NCK2, thereby linking the complex to cell surface receptors. Interacts (via LIM zinc-binding 5) with TGFB1I1.

The protein resides in the cell junction. It localises to the focal adhesion. The protein localises to the cell membrane. In terms of biological role, within the IPP (ILK-PINCH-PARVIN) complex, binds to F-actin, promoting F-actin bundling, a process required to generate force for actin cytoskeleton reorganization and subsequent dynamic cell adhesion events such as cell spreading and migration. In Mus musculus (Mouse), this protein is LIM and senescent cell antigen-like-containing domain protein 1 (Lims1).